We begin with the raw amino-acid sequence, 372 residues long: 4-hydroxy-3-methylbut-2-en-1-yl diphosphate synthase (flavodoxin) (372 aa).

[4Fe-4S] cluster is bound by residues Cys270, Cys273, Cys305, and Glu312.

This sequence belongs to the IspG family. The cofactor is [4Fe-4S] cluster.

It catalyses the reaction (2E)-4-hydroxy-3-methylbut-2-enyl diphosphate + oxidized [flavodoxin] + H2O + 2 H(+) = 2-C-methyl-D-erythritol 2,4-cyclic diphosphate + reduced [flavodoxin]. It participates in isoprenoid biosynthesis; isopentenyl diphosphate biosynthesis via DXP pathway; isopentenyl diphosphate from 1-deoxy-D-xylulose 5-phosphate: step 5/6. Functionally, converts 2C-methyl-D-erythritol 2,4-cyclodiphosphate (ME-2,4cPP) into 1-hydroxy-2-methyl-2-(E)-butenyl 4-diphosphate. The protein is 4-hydroxy-3-methylbut-2-en-1-yl diphosphate synthase (flavodoxin) of Salmonella gallinarum (strain 287/91 / NCTC 13346).